A 347-amino-acid polypeptide reads, in one-letter code: Lipoyl synthase (347 aa).

[4Fe-4S] cluster-binding residues include C77, C82, C88, C103, C107, C110, and S317. A Radical SAM core domain is found at 89–306 (FADGTATFMI…MDYGKKIGFF (218 aa)).

This sequence belongs to the radical SAM superfamily. Lipoyl synthase family. [4Fe-4S] cluster serves as cofactor.

The protein localises to the cytoplasm. It carries out the reaction [[Fe-S] cluster scaffold protein carrying a second [4Fe-4S](2+) cluster] + N(6)-octanoyl-L-lysyl-[protein] + 2 oxidized [2Fe-2S]-[ferredoxin] + 2 S-adenosyl-L-methionine + 4 H(+) = [[Fe-S] cluster scaffold protein] + N(6)-[(R)-dihydrolipoyl]-L-lysyl-[protein] + 4 Fe(3+) + 2 hydrogen sulfide + 2 5'-deoxyadenosine + 2 L-methionine + 2 reduced [2Fe-2S]-[ferredoxin]. The protein operates within protein modification; protein lipoylation via endogenous pathway; protein N(6)-(lipoyl)lysine from octanoyl-[acyl-carrier-protein]: step 2/2. Catalyzes the radical-mediated insertion of two sulfur atoms into the C-6 and C-8 positions of the octanoyl moiety bound to the lipoyl domains of lipoate-dependent enzymes, thereby converting the octanoylated domains into lipoylated derivatives. This chain is Lipoyl synthase, found in Psychrobacter cryohalolentis (strain ATCC BAA-1226 / DSM 17306 / VKM B-2378 / K5).